We begin with the raw amino-acid sequence, 847 residues long: B-cell receptor CD22 (847 aa).

An N-terminal signal peptide occupies residues 1-19 (MHLLGPWLLLLVLEYLAFC). An Ig-like V-type domain is found at 20–138 (DSSKWAFEHP…MERIHLNVSE (119 aa)). The Extracellular segment spans residues 20-687 (DSSKWAFEHP…YYSPETIGRR (668 aa)). N-linked (GlcNAc...) asparagine glycans are attached at residues asparagine 67, asparagine 101, and asparagine 112. Position 120 (arginine 120) interacts with N-acetylneuraminate. N-linked (GlcNAc...) asparagine glycosylation is found at asparagine 135, asparagine 164, asparagine 231, asparagine 295, asparagine 363, asparagine 428, asparagine 445, asparagine 448, and asparagine 479. Ig-like C2-type domains are found at residues 143–235 (PHIQ…DTVQ), 242–324 (PKLE…AEVF), 331–416 (PEPS…LDVQ), 419–500 (PKKV…VALN), 505–582 (PRDV…QTAS), and 593–676 (PRRL…STLN). Cysteine 161 and cysteine 219 are oxidised to a cystine. 2 cysteine pairs are disulfide-bonded: cysteine 265-cysteine 309 and cysteine 353-cysteine 396. Intrachain disulfides connect cysteine 442-cysteine 484 and cysteine 529-cysteine 571. 2 N-linked (GlcNAc...) asparagine glycosylation sites follow: asparagine 574 and asparagine 634. Cysteine 616 and cysteine 659 form a disulfide bridge. The helical transmembrane segment at 688–708 (VAVGLGSCLAILILAICGLKL) threads the bilayer. Topologically, residues 709–847 (QRRWKRTQSQ…ENVDYVILKH (139 aa)) are cytoplasmic. Residues serine 725, serine 726, and serine 729 each carry the phosphoserine modification. Short sequence motifs (ITIM motif) lie at residues 760 to 765 (ISYTTL) and 794 to 799 (VTYSVL). Tyrosine 762 bears the Phosphotyrosine mark. A phosphotyrosine mark is found at tyrosine 807, tyrosine 822, and tyrosine 842. 2 short sequence motifs (ITIM motif) span residues 820-825 (IHYSEL) and 840-845 (VDYVIL).

This sequence belongs to the immunoglobulin superfamily. SIGLEC (sialic acid binding Ig-like lectin) family. Predominantly monomer of isoform CD22-beta. Also found as heterodimer of isoform CD22-beta and a shorter isoform. Interacts with PTPN6/SHP-1, LYN, SYK, PIK3R1/PIK3R2 and PLCG1 upon phosphorylation. Interacts with GRB2, INPP5D and SHC1 upon phosphorylation. May form a complex with INPP5D/SHIP, GRB2 and SHC1. Post-translationally, phosphorylation of Tyr-762, Tyr-807 and Tyr-822 are involved in binding to SYK, GRB2 and SYK, respectively. Phosphorylation of Tyr-842 is involved in binding to SYK, PLCG2 and PIK3R1/PIK3R2. In terms of processing, phosphorylated on tyrosine residues by LYN.

Its subcellular location is the cell membrane. In terms of biological role, most highly expressed siglec (sialic acid-binding immunoglobulin-like lectin) on B-cells that plays a role in various aspects of B-cell biology including differentiation, antigen presentation, and trafficking to bone marrow. Binds to alpha 2,6-linked sialic acid residues of surface molecules such as CD22 itself, CD45 and IgM in a cis configuration. Can also bind to ligands on other cells as an adhesion molecule in a trans configuration. Acts as an inhibitory coreceptor on the surface of B-cells and inhibits B-cell receptor induced signaling, characterized by inhibition of the calcium mobilization and cellular activation. Mechanistically, the immunoreceptor tyrosine-based inhibitory motif domain is phosphorylated by the Src kinase LYN, which in turn leads to the recruitment of the protein tyrosine phosphatase 1/PTPN6, leading to the negative regulation of BCR signaling. If this negative signaling from is of sufficient strength, apoptosis of the B-cell can be induced. This is B-cell receptor CD22 from Gorilla gorilla gorilla (Western lowland gorilla).